We begin with the raw amino-acid sequence, 404 residues long: Argininosuccinate synthase (404 aa).

Residues 10–18 (AYSGGLDTS) and alanine 37 each bind ATP. Residues tyrosine 88 and serine 93 each contribute to the L-citrulline site. Glycine 118 lines the ATP pocket. L-aspartate contacts are provided by threonine 120, asparagine 124, and aspartate 125. An L-citrulline-binding site is contributed by asparagine 124. L-citrulline contacts are provided by arginine 128, serine 178, serine 187, glutamate 263, and tyrosine 275.

It belongs to the argininosuccinate synthase family. Type 1 subfamily. In terms of assembly, homotetramer.

It is found in the cytoplasm. The enzyme catalyses L-citrulline + L-aspartate + ATP = 2-(N(omega)-L-arginino)succinate + AMP + diphosphate + H(+). It functions in the pathway amino-acid biosynthesis; L-arginine biosynthesis; L-arginine from L-ornithine and carbamoyl phosphate: step 2/3. In Hahella chejuensis (strain KCTC 2396), this protein is Argininosuccinate synthase.